Reading from the N-terminus, the 191-residue chain is Adenylate kinase (191 aa).

ATP is bound at residue 10-15; that stretch reads AAGKGT. Residues 30-59 form an NMP region; it reads STGDMLRAAIASGSELGQRVKGVLDRGELV. AMP contacts are provided by residues threonine 31, arginine 36, 57–59, 85–88, and glutamine 92; these read ELV and GFPR. The segment at 126–136 is LID; that stretch reads KRFEEQGRPDD. Arginine 127 is an ATP binding site. Residues arginine 133 and arginine 144 each coordinate AMP. An ATP-binding site is contributed by glycine 172.

The protein belongs to the adenylate kinase family. As to quaternary structure, monomer.

The protein localises to the cytoplasm. It carries out the reaction AMP + ATP = 2 ADP. Its pathway is purine metabolism; AMP biosynthesis via salvage pathway; AMP from ADP: step 1/1. Its function is as follows. Catalyzes the reversible transfer of the terminal phosphate group between ATP and AMP. Plays an important role in cellular energy homeostasis and in adenine nucleotide metabolism. In Caulobacter vibrioides (strain ATCC 19089 / CIP 103742 / CB 15) (Caulobacter crescentus), this protein is Adenylate kinase.